The following is a 219-amino-acid chain: Pyridoxine/pyridoxamine 5'-phosphate oxidase (219 aa).

The interval 1 to 23 is disordered; the sequence is MTSSVIPPSPSAADYAAEGDRPL. Residues 66–71, 81–82, Lys-88, and Gln-110 contribute to the FMN site; these read RIVLLK and FT. Lys-71 is a substrate binding site. Residues Tyr-128, Arg-132, and Ser-136 each coordinate substrate. FMN contacts are provided by residues 145-146 and Trp-191; that span reads QS. Residue 197-199 coordinates substrate; sequence RMH. Arg-201 contacts FMN.

Belongs to the pyridoxamine 5'-phosphate oxidase family. Homodimer. FMN is required as a cofactor.

The enzyme catalyses pyridoxamine 5'-phosphate + O2 + H2O = pyridoxal 5'-phosphate + H2O2 + NH4(+). The catalysed reaction is pyridoxine 5'-phosphate + O2 = pyridoxal 5'-phosphate + H2O2. Its pathway is cofactor metabolism; pyridoxal 5'-phosphate salvage; pyridoxal 5'-phosphate from pyridoxamine 5'-phosphate: step 1/1. The protein operates within cofactor metabolism; pyridoxal 5'-phosphate salvage; pyridoxal 5'-phosphate from pyridoxine 5'-phosphate: step 1/1. In terms of biological role, catalyzes the oxidation of either pyridoxine 5'-phosphate (PNP) or pyridoxamine 5'-phosphate (PMP) into pyridoxal 5'-phosphate (PLP). The polypeptide is Pyridoxine/pyridoxamine 5'-phosphate oxidase (Hyphomonas neptunium (strain ATCC 15444)).